A 417-amino-acid chain; its full sequence is uncharacterized protein (417 aa).

It to M.tuberculosis Rv2067c.

This is an uncharacterized protein from Synechococcus sp. (strain ATCC 27144 / PCC 6301 / SAUG 1402/1) (Anacystis nidulans).